A 268-amino-acid polypeptide reads, in one-letter code: Undecaprenyl-diphosphatase (268 aa).

The next 7 helical transmembrane spans lie at 47-67, 83-103, 109-129, 144-164, 184-204, 218-238, and 246-266; these read FTVLIQPGAILAIVVIYFAKL, FVIGVLAAFLPAVIVGLIAGK, LFNPWVVCFSLIVGGAVLMWV, FPLPMYVWIGIAQCVAMIPGV, AAEFSFFLAIPTMTGAFAYDF, TVAIGFVVSFVTAIIVVKAFL, and FTFFAWWRVIVGTLGLIALAL.

It belongs to the UppP family.

It is found in the cell inner membrane. The enzyme catalyses di-trans,octa-cis-undecaprenyl diphosphate + H2O = di-trans,octa-cis-undecaprenyl phosphate + phosphate + H(+). Functionally, catalyzes the dephosphorylation of undecaprenyl diphosphate (UPP). Confers resistance to bacitracin. In Nitrobacter winogradskyi (strain ATCC 25391 / DSM 10237 / CIP 104748 / NCIMB 11846 / Nb-255), this protein is Undecaprenyl-diphosphatase.